We begin with the raw amino-acid sequence, 492 residues long: MELNQPPLPTEIDGDAYHKPSFNDLGLKESVLKSVYEAGFTSPSPIQEKAIPAVLQGRDVIAQAQTGTGKTAAFALPIINNLKNNHTIEALVITPTRELAMQISDEIFKLGKHTRTKTVCVYGGQSVKKQCEFIKKNPQVMIATPGRLLDHLKNERIHKFVPKVVVLDESDEMLDMGFLDDIEEIFDYLPSEAQILLFSATMPEPIKRLADKILENPIKIHIAPSNITNTDITQRFYVINEHERAEAIMRLLDTQAPKKSIVFTRTKKEADELHQFLASKNYKSTALHGDMDQRDRRSSIMAFKKNDADVLVATDVASRGLDISGVSHVFNYHLPLNTESYIHRIGRTGRAGKKGMAITLVTPLEYKELLRMQKEIDSEIELFEIPTINENQIIKTLHDAKVSEGIISLYEQLTEIFEPSQLVLKLLSLQFETSKIGLNQQEIDAIQNPKEKTPKPSNKKTPQHERARSFKKGQHRDRHPKTNHYSKKPKRR.

A Q motif motif is present at residues 20–48; sequence PSFNDLGLKESVLKSVYEAGFTSPSPIQE. One can recognise a Helicase ATP-binding domain in the interval 51–220; that stretch reads IPAVLQGRDV…DKILENPIKI (170 aa). An ATP-binding site is contributed by 64 to 71; the sequence is AQTGTGKT. The DEAD box motif lies at 168-171; it reads DESD. The region spanning 231-393 is the Helicase C-terminal domain; it reads DITQRFYVIN…EIPTINENQI (163 aa). A disordered region spans residues 445 to 492; it reads AIQNPKEKTPKPSNKKTPQHERARSFKKGQHRDRHPKTNHYSKKPKRR. Positions 469–492 are enriched in basic residues; sequence SFKKGQHRDRHPKTNHYSKKPKRR.

It belongs to the DEAD box helicase family. As to quaternary structure, homodimer. Interacts with RNase J (rnj), might be a member of a minimal RNA degradosome complex.

The protein localises to the cytoplasm. It carries out the reaction ATP + H2O = ADP + phosphate + H(+). In terms of biological role, DEAD-box RNA helicase probably involved in RNA degradation. Unwinds dsRNA in both 5'- and 3'-directions. The protein is DEAD-box ATP-dependent RNA helicase RhpA (rhpA) of Helicobacter pylori (strain ATCC 700392 / 26695) (Campylobacter pylori).